Consider the following 2559-residue polypeptide: Ubiquitin carboxyl-terminal hydrolase 9X (2559 aa).

Residues 1–44 (MTATTRGSPVGGNDNQGQAPDGQSQPPLQQNQTSSPDSSNENSP) are compositionally biased toward polar residues. The disordered stretch occupies residues 1-64 (MTATTRGSPV…DAPPQIEDEE (64 aa)). S374, S375, and S588 each carry phosphoserine. The interval 967–999 (QISSNMPSSPDSSSDSSTGSPGNHGNHYSDGPN) is disordered. Residues 969-989 (SSNMPSSPDSSSDSSTGSPGN) are compositionally biased toward low complexity. The USP domain occupies 1557 to 1956 (VGLKNAGATC…NAYILFYERM (400 aa)). C1566 serves as the catalytic Nucleophile. The disordered stretch occupies residues 1592 to 1633 (GSDVDDDMSGDEKQDNESNVDPRDDVFGYPQQFEDKPPLSKT). S1600 is subject to Phosphoserine. Composition is skewed to basic and acidic residues over residues 1601–1617 (GDEKQDNESNVDPRDDV) and 1624–1633 (FEDKPPLSKT). The Zn(2+) site is built by C1727, H1729, C1771, and C1774. H1879 serves as the catalytic Proton acceptor. At S2443 the chain carries Phosphoserine. The span at 2475 to 2484 (PEEEPDDQDA) shows a compositional bias: acidic residues. Positions 2475–2559 (PEEEPDDQDA…QTKGSVKCTY (85 aa)) are disordered. Composition is skewed to polar residues over residues 2503-2513 (PGSQYQQNNHV) and 2527-2537 (NNPQRTGQRAQ). Residue Y2540 is modified to Phosphotyrosine. S2547 carries the post-translational modification Phosphoserine. T2551 carries the post-translational modification Phosphothreonine.

It belongs to the peptidase C19 family. As to quaternary structure, interacts with SMAD4, MARK4, NUAK1 and BIRC5/survivin. Interacts with DCX. Interacts with OTUD4 and USP7; the interaction is direct. As to expression, highest levels in liver and brain with expression also detected in heart, muscle, spleen and kidney (at protein leve). Ubiquitously expressed in adult tissues.

The protein resides in the cytoplasm. It is found in the cytosol. The protein localises to the cell projection. Its subcellular location is the growth cone. It localises to the cytoskeleton. The protein resides in the cilium axoneme. It carries out the reaction Thiol-dependent hydrolysis of ester, thioester, amide, peptide and isopeptide bonds formed by the C-terminal Gly of ubiquitin (a 76-residue protein attached to proteins as an intracellular targeting signal).. In terms of biological role, deubiquitinase involved both in the processing of ubiquitin precursors and of ubiquitinated proteins. May therefore play an important regulatory role at the level of protein turnover by preventing degradation of proteins through the removal of conjugated ubiquitin. Specifically hydrolyzes 'Lys-11'-, followed by 'Lys-63'-, 'Lys-48'- and 'Lys-6'-linked polyubiquitins chains. Essential component of TGF-beta/BMP signaling cascade. Specifically deubiquitinates monoubiquitinated SMAD4, opposing the activity of E3 ubiquitin-protein ligase TRIM33. Deubiquitinates alkylation repair enzyme ALKBH3. OTUD4 recruits USP7 and USP9X to stabilize ALKBH3, thereby promoting the repair of alkylated DNA lesions. Deubiquitinates RNA demethylase enzyme ALKBH5, promoting its stability. Deubiquitinates mTORC2 complex component RICTOR at 'Lys-294' by removing 'Lys-63'-linked polyubiquitin chains, stabilizing RICTOR and enhancing its binding to MTOR, thus promoting mTORC2 complex assembly. Regulates chromosome alignment and segregation in mitosis by regulating the localization of BIRC5/survivin to mitotic centromeres. Involved in axonal growth and neuronal cell migration. Regulates cellular clock function by enhancing the protein stability and transcriptional activity of the core circadian protein BMAL1 via its deubiquitinating activity. Acts as a regulator of peroxisome import by mediating deubiquitination of PEX5: specifically deubiquitinates PEX5 monoubiquitinated at 'Cys-11' following its retrotranslocation into the cytosol, resetting PEX5 for a subsequent import cycle. Deubiquitinates PEG10. Inhibits the activation of the Hippo signaling pathway via deubiquitination of AMOTL2 at 'Lys-337' and 'Lys-404' which prohibits its interaction with and activation of LATS2. Loss of LATS2 activation and subsequent loss of YAP1 phosphorylation results in an increase in YAP1-driven transcription of target genes. The chain is Ubiquitin carboxyl-terminal hydrolase 9X from Mus musculus (Mouse).